Here is a 486-residue protein sequence, read N- to C-terminus: MSEQKEDLFKPVGEAAAEVEDESIAEQNKANDGVKLTGAQDAMGHPVQEIESLCMNCGKNGTTRLLLTSIPYFREIIIMSFDCPHCGFKNCEIQPASQIQEKGSRYVLKVECREDFNRQVIKSETATCKFVELDIEIPAKRGQLTTVEGLLSEMIDDLSQDQEMRKSIDEALYKKIDDFIQKVKSYINCEPNTIPITFILDDPAGNSWIEYKPGEPQHKWSHTQYVRTDEQNVQVGIITRDQLEQRRQEQLKQLANRERNPSESVKVGSANPQFLSDATDIENFNNEVQTFRASCPSCTQECETHMKPVNIPHFKEVIIMSTVCDHCGYKSNEVKTGGAIPDKGRRITLYCDDAADLSRDILKSETCSMVIPELHLDIQEGTLGGRFTTLEGLLRQVYEELESRIFTQTSDSMDEATKARWVEFFAKLKEAIAGKVKFTVIMEDPLAGSYIQNVYAPDPDPNMTIEDYERTKEQNEDLGLSDIKVE.

A disordered region spans residues 1 to 31 (MSEQKEDLFKPVGEAAAEVEDESIAEQNKAN). Ser23 is modified (phosphoserine). 2 C4-type zinc fingers span residues 54–86 (CMNCGKNGTTRLLLTSIPYFREIIIMSFDCPHC) and 295–327 (CPSCTQECETHMKPVNIPHFKEVIIMSTVCDHC). Thr407 carries the post-translational modification Phosphothreonine.

This sequence belongs to the ZPR1 family. In terms of assembly, interacts with elongation factor 1-alpha.

It localises to the cytoplasm. It is found in the nucleus. Functionally, acts as a protein folding chaperone for elongation factor 1-alpha. This chain is Zinc finger chaperone ZPR1, found in Saccharomyces cerevisiae (strain ATCC 204508 / S288c) (Baker's yeast).